We begin with the raw amino-acid sequence, 147 residues long: Large ribosomal subunit protein bL9 (147 aa).

Belongs to the bacterial ribosomal protein bL9 family.

Its function is as follows. Binds to the 23S rRNA. This Thermoanaerobacter pseudethanolicus (strain ATCC 33223 / 39E) (Clostridium thermohydrosulfuricum) protein is Large ribosomal subunit protein bL9.